We begin with the raw amino-acid sequence, 378 residues long: 5-amino-6-(D-ribitylamino)uracil--L-tyrosine 4-hydroxyphenyl transferase (378 aa).

Positions 59–306 (VTYVINRNIN…TAVARIYLGN (248 aa)) constitute a Radical SAM core domain. 3 residues coordinate [4Fe-4S] cluster: Cys-73, Cys-77, and Cys-80.

Belongs to the radical SAM superfamily. CofH family. In terms of assembly, consists of two subunits, CofG and CofH. The cofactor is [4Fe-4S] cluster.

The enzyme catalyses 5-amino-6-(D-ribitylamino)uracil + L-tyrosine + S-adenosyl-L-methionine = 5-amino-5-(4-hydroxybenzyl)-6-(D-ribitylimino)-5,6-dihydrouracil + 2-iminoacetate + 5'-deoxyadenosine + L-methionine + H(+). It functions in the pathway cofactor biosynthesis; coenzyme F0 biosynthesis. Catalyzes the radical-mediated synthesis of 5-amino-5-(4-hydroxybenzyl)-6-(D-ribitylimino)-5,6-dihydrouracil from 5-amino-6-(D-ribitylamino)uracil and L-tyrosine. This is 5-amino-6-(D-ribitylamino)uracil--L-tyrosine 4-hydroxyphenyl transferase from Microcystis aeruginosa (strain NIES-843 / IAM M-2473).